Reading from the N-terminus, the 84-residue chain is MVSIRLARGGAKKRPFYHVVVAESRSKRDGRYIERVGFFNPIARGQEERLRLDESRIAYWIGTGAKPSDRVVSLIKEFKKQQQV.

This sequence belongs to the bacterial ribosomal protein bS16 family.

The polypeptide is Small ribosomal subunit protein bS16 (Methylococcus capsulatus (strain ATCC 33009 / NCIMB 11132 / Bath)).